The following is a 399-amino-acid chain: Ankyrin repeat domain-containing protein 65 (399 aa).

ANK repeat units lie at residues 40–69 (QGWG…SVEE), 73–102 (AGRT…PVGA), 106–135 (AGRT…SAAA), 139–168 (TGLT…PGPA), 176–205 (RGWT…GLDG), 207–231 (LLVA…RVDA), 235–264 (AGAT…DPGI), 268–297 (HGRS…EVDA), 301–330 (LGLT…QVDA), and 334–363 (LRKT…SPTL). Positions 377 to 399 (DLPQALPELGGGEKECEGIESTG) are disordered.

This Homo sapiens (Human) protein is Ankyrin repeat domain-containing protein 65 (ANKRD65).